The sequence spans 303 residues: RELT-like protein 2 (303 aa).

The chain crosses the membrane as a helical span at residues 15–35 (LYMLFLLVLVFFLMGLVGFMI). Disordered regions lie at residues 46-67 (CRTS…DDDM) and 132-303 (CLHC…AGSM). At Ser-52 the chain carries Phosphoserine. Composition is skewed to basic and acidic residues over residues 148–158 (RSKEGKSRPRT) and 172–188 (THIE…DGSP). The segment covering 194–212 (GSGGGQDPGGGQGSGGGQP) has biased composition (gly residues). The span at 278–296 (QEANGQPSKPDTSDHQVSL) shows a compositional bias: polar residues.

The protein belongs to the RELT family. Interacts with RELT, RELL1 and OXSR1. Interacts with PLSCR1. Interacts with TRAF2. In terms of processing, phosphorylated in vitro by OXSR1. In terms of tissue distribution, primarily expressed in spleen, thymus, testis, peripheral blood leukocytes, brain and placenta. Not detected in prostate, ovary, small intestine, colon, heart, lung, liver, skeletal muscle, kidney and pancreas.

It is found in the cell membrane. Functionally, induces activation of MAPK14/p38 cascade, when overexpressed. Induces apoptosis, when overexpressed. The chain is RELT-like protein 2 (RELL2) from Homo sapiens (Human).